A 137-amino-acid chain; its full sequence is Small ribosomal subunit protein bS6 (137 aa).

The segment at 96–137 is disordered; sequence VTEQSIMLKQKEERAERAPRRDDREERAPRREEEAKPEAAAE. Basic and acidic residues predominate over residues 104–137; that stretch reads KQKEERAERAPRRDDREERAPRREEEAKPEAAAE.

Belongs to the bacterial ribosomal protein bS6 family.

Its function is as follows. Binds together with bS18 to 16S ribosomal RNA. The protein is Small ribosomal subunit protein bS6 of Vibrio atlanticus (strain LGP32) (Vibrio splendidus (strain Mel32)).